We begin with the raw amino-acid sequence, 72 residues long: Disintegrin cotiarin (72 aa).

Residues 1-72 (EAGEECDCGA…SADCPRNRFH (72 aa)) form the Disintegrin domain. 6 cysteine pairs are disulfide-bonded: Cys6-Cys21, Cys8-Cys16, Cys15-Cys38, Cys29-Cys35, Cys34-Cys59, and Cys47-Cys66. A Cell attachment site motif is present at residues 51 to 53 (RGD). Residues 51 to 72 (RGDNPDDRCTGQSADCPRNRFH) form a disordered region.

This sequence belongs to the venom metalloproteinase (M12B) family. P-II subfamily. P-IIa sub-subfamily. Monomer. In terms of tissue distribution, expressed by the venom gland.

The protein localises to the secreted. Its function is as follows. Inhibits fibrinogen interaction with platelets. Acts by binding to alpha-IIb/beta-3 (ITGA2B/ITGB3) on the platelet surface and inhibits aggregation induced by ADP, thrombin, platelet-activating factor and collagen. The sequence is that of Disintegrin cotiarin from Bothrops cotiara (Cotiara).